An 868-amino-acid chain; its full sequence is Protein translocase subunit SecA (868 aa).

Residues Gln85, 103–107 (GEGKT), and Asp508 each bind ATP.

The protein belongs to the SecA family. Monomer and homodimer. Part of the essential Sec protein translocation apparatus which comprises SecA, SecYEG and auxiliary proteins SecDF. Other proteins may also be involved.

Its subcellular location is the cell membrane. The protein resides in the cytoplasm. It carries out the reaction ATP + H2O + cellular proteinSide 1 = ADP + phosphate + cellular proteinSide 2.. Its function is as follows. Part of the Sec protein translocase complex. Interacts with the SecYEG preprotein conducting channel. Has a central role in coupling the hydrolysis of ATP to the transfer of proteins into and across the cell membrane, serving as an ATP-driven molecular motor driving the stepwise translocation of polypeptide chains across the membrane. The polypeptide is Protein translocase subunit SecA (Deinococcus radiodurans (strain ATCC 13939 / DSM 20539 / JCM 16871 / CCUG 27074 / LMG 4051 / NBRC 15346 / NCIMB 9279 / VKM B-1422 / R1)).